Reading from the N-terminus, the 602-residue chain is MSQQLQSRRLRQPIVVVLGHVDHGKTTLLDKIRGTAVVKKEPGEMTQEVGASFVPTSVIEKIAEPLKKTFPIKLEIPGLLFIDTPGHELFSNLRRRGGSVADIAILVVDVVEGFQKQTYESLEILRSRKVPFLVAANKIDRIPGWKPIDTYSFLESIKSQRKDVQTQLDNYVYRLVGQLAELGFNADRFDRIRDFTKTVAIVPVSAKTGEGIAELLALLAGLTQNYMKTKLRFAEGPAKGVILEVKELQGLGYTIDVIIYDGILKKNDTIIIGGLNGPIVTKVRSILVPKPLQDIKVVKTDLTQIDEVYAAAGVKIYAPELENALAGSPLFVAENEQQIEEYKKIIQEEIASVKYYNANIAGIVVKADSLGSLEAIVEGLKQKNIPIRLADIGPITKKDITEAELTLQEAKEYGIIAAFRVKPLQGIEVPNNIKLIYSEIIYQLIDDIEKYITEVRESEKRRTLDSLILPGKFRLIPGYVFRRSDPVIVGVEVLGGIIRPKFPVMKKDGKRVGEILQIQDNKKSVDRATKGMEVAVSIKGNIMVGRQIDEGEILYTDVPKEDLEILLTKYKDIITDDMKEVIKEIINIKRVNDPTYALGLKV.

The region spanning 10-227 (LRQPIVVVLG…LLAGLTQNYM (218 aa)) is the tr-type G domain. Residues 19–26 (GHVDHGKT) are G1. Residue 19-26 (GHVDHGKT) coordinates GTP. Positions 44–48 (EMTQE) are G2. The interval 83–86 (DTPG) is G3. GTP is bound by residues 83–87 (DTPGH) and 137–140 (NKID). The tract at residues 137–140 (NKID) is G4. The interval 205–207 (SAK) is G5.

Belongs to the TRAFAC class translation factor GTPase superfamily. Classic translation factor GTPase family. IF-2 subfamily.

Function in general translation initiation by promoting the binding of the formylmethionine-tRNA to ribosomes. Seems to function along with eIF-2. This Sulfurisphaera tokodaii (strain DSM 16993 / JCM 10545 / NBRC 100140 / 7) (Sulfolobus tokodaii) protein is Probable translation initiation factor IF-2.